The primary structure comprises 657 residues: DNA mismatch repair protein MutL (657 aa).

This sequence belongs to the DNA mismatch repair MutL/HexB family.

In terms of biological role, this protein is involved in the repair of mismatches in DNA. It is required for dam-dependent methyl-directed DNA mismatch repair. May act as a 'molecular matchmaker', a protein that promotes the formation of a stable complex between two or more DNA-binding proteins in an ATP-dependent manner without itself being part of a final effector complex. The protein is DNA mismatch repair protein MutL of Streptococcus agalactiae serotype III (strain NEM316).